The chain runs to 554 residues: MAIQHPDIQPAVNHSVQVAIAGAGPVGLMMANYLGQMGIDVLVVEKLDKLIDYPRAIGIDDEALRTMQSVGLVDDVLPHTTPWHAMRFLTPKGRCFADIQPMTDEFGWPRRNAFIQPQVDAVMLEGVSRFPNVRCLFSRELEAFSQQDDEVTLHLKTAEGQREIVKAQWLVACDGGASFVRRTLNVPFEGKTAPNQWIVVDIANDPLSTPHIYLCCDPVRPYVSAALPHAVRRFEFMVMPGETEEQLREPQNMRKLLSKVLPNPDNVELIRQRVYTHNARLAQRFRIDRVLLAGDAAHIMPVWQGQGYNSGMRDAFNLAWKLALVIQGKARDALLDTYQQERRDHAKAMIDLSVTAGNVLAPPKRWQGTLRDGVSWLLNYLPPVKRYFLEMRFKPMPQYYGGALMREGEAKHSPVGKMFIQPKVTLENGDVTLLDNAIGANFAVIGWGCNPLWGMSDEQIQQWRALGTRFIQVVPEVQIHTAQDNHDGVLRVGDTQGRLRSWFAQHNASLVVMRPDRFVAATAIPQTLGKTLNKLASVMTLTRPDADVSVEKVA.

FAD contacts are provided by residues 17 to 46 (QVAIAGAGPVGLMMANYLGQMGIDVLVVEK) and 285 to 295 (FRIDRVLLAGD).

Belongs to the PheA/TfdB FAD monooxygenase family. FAD serves as cofactor.

It catalyses the reaction 3-(3-hydroxyphenyl)propanoate + NADH + O2 + H(+) = 3-(2,3-dihydroxyphenyl)propanoate + NAD(+) + H2O. The catalysed reaction is (2E)-3-(3-hydroxyphenyl)prop-2-enoate + NADH + O2 + H(+) = (2E)-3-(2,3-dihydroxyphenyl)prop-2-enoate + NAD(+) + H2O. It functions in the pathway aromatic compound metabolism; 3-phenylpropanoate degradation. Functionally, catalyzes the insertion of one atom of molecular oxygen into position 2 of the phenyl ring of 3-(3-hydroxyphenyl)propionate (3-HPP) and hydroxycinnamic acid (3HCI). The protein is 3-(3-hydroxy-phenyl)propionate/3-hydroxycinnamic acid hydroxylase of Escherichia coli (strain K12 / DH10B).